We begin with the raw amino-acid sequence, 266 residues long: Proteasome subunit beta type-7 (266 aa).

Positions 1–33 are excised as a propeptide; that stretch reads MNHDPFSWGRPADSTYGAYNTQIANAGASPMVN.

This sequence belongs to the peptidase T1B family. The 26S proteasome consists of a 20S proteasome core and two 19S regulatory subunits. The 20S proteasome core is composed of 28 subunits that are arranged in four stacked rings, resulting in a barrel-shaped structure. The two end rings are each formed by seven alpha subunits, and the two central rings are each formed by seven beta subunits. The catalytic chamber with the active sites is on the inside of the barrel. Interacts with CIC1.

It is found in the cytoplasm. It localises to the nucleus. In terms of biological role, non-catalytic component of the proteasome which degrades poly-ubiquitinated proteins in the cytoplasm and in the nucleus. It is essential for the regulated turnover of proteins and for the removal of misfolded proteins. The proteasome is a multicatalytic proteinase complex that is characterized by its ability to cleave peptides with Arg, Phe, Tyr, Leu, and Glu adjacent to the leaving group at neutral or slightly basic pH. It has an ATP-dependent proteolytic activity. PRE3 and PRE4 are necessary for the peptidyl-glutamyl-peptide-hydrolyzing activity. The polypeptide is Proteasome subunit beta type-7 (PRE4) (Saccharomyces cerevisiae (strain ATCC 204508 / S288c) (Baker's yeast)).